The primary structure comprises 298 residues: N-acetylmuramic acid 6-phosphate etherase 2 (298 aa).

One can recognise an SIS domain in the interval Ile-51–Arg-214. Glu-79 acts as the Proton donor in catalysis. Residue Glu-110 is part of the active site.

The protein belongs to the GCKR-like family. MurNAc-6-P etherase subfamily. As to quaternary structure, homodimer.

It catalyses the reaction N-acetyl-D-muramate 6-phosphate + H2O = N-acetyl-D-glucosamine 6-phosphate + (R)-lactate. It participates in amino-sugar metabolism; N-acetylmuramate degradation. In terms of biological role, specifically catalyzes the cleavage of the D-lactyl ether substituent of MurNAc 6-phosphate, producing GlcNAc 6-phosphate and D-lactate. The polypeptide is N-acetylmuramic acid 6-phosphate etherase 2 (Bacillus licheniformis (strain ATCC 14580 / DSM 13 / JCM 2505 / CCUG 7422 / NBRC 12200 / NCIMB 9375 / NCTC 10341 / NRRL NRS-1264 / Gibson 46)).